The chain runs to 454 residues: Transmembrane protein adipocyte-associated 1 homolog (454 aa).

Residues N26 and N44 are each glycosylated (N-linked (GlcNAc...) asparagine). 5 helical membrane-spanning segments follow: residues 80 to 100 (AILI…TSVI), 113 to 133 (AFTL…VYSM), 151 to 171 (IIIK…GLLF), 180 to 200 (ILIA…VQVI), and 224 to 244 (FVFW…IMCL). N-linked (GlcNAc...) asparagine glycosylation occurs at N258. The next 2 membrane-spanning stretches (helical) occupy residues 262–282 (FIYC…AALI) and 290–310 (LCFV…IIYF). Residues N322 and N323 are each glycosylated (N-linked (GlcNAc...) asparagine). Residues 408–454 (RTGSDDFAHHRDSMLSEPSTGTTTRHLKGLGPQGSLVFEEDPSSLRL) are disordered. Over residues 410–421 (GSDDFAHHRDSM) the composition is skewed to basic and acidic residues. Positions 445-454 (FEEDPSSLRL) are enriched in acidic residues.

This sequence belongs to the UPF0359 family.

The protein localises to the membrane. The polypeptide is Transmembrane protein adipocyte-associated 1 homolog (tpra-1) (Caenorhabditis briggsae).